Here is a 294-residue protein sequence, read N- to C-terminus: tRNA dimethylallyltransferase (294 aa).

Residue 10-17 (GITASGKS) participates in ATP binding. 12–17 (TASGKS) provides a ligand contact to substrate. An interaction with substrate tRNA region spans residues 36–39 (DSKQ).

It belongs to the IPP transferase family. As to quaternary structure, monomer. It depends on Mg(2+) as a cofactor.

The enzyme catalyses adenosine(37) in tRNA + dimethylallyl diphosphate = N(6)-dimethylallyladenosine(37) in tRNA + diphosphate. In terms of biological role, catalyzes the transfer of a dimethylallyl group onto the adenine at position 37 in tRNAs that read codons beginning with uridine, leading to the formation of N6-(dimethylallyl)adenosine (i(6)A). This is tRNA dimethylallyltransferase from Wolbachia sp. subsp. Drosophila simulans (strain wRi).